A 556-amino-acid chain; its full sequence is Urocanate hydratase (556 aa).

Residues Gly52–Gly53, Gln130, Gly176–Gly178, Glu196, Arg201, Asn242–Ala243, Gln263–His267, Tyr273–Leu274, and Tyr322 each bind NAD(+). The active site involves Cys410. Gly492 is a binding site for NAD(+).

Belongs to the urocanase family. NAD(+) is required as a cofactor.

The protein localises to the cytoplasm. The catalysed reaction is 4-imidazolone-5-propanoate = trans-urocanate + H2O. The protein operates within amino-acid degradation; L-histidine degradation into L-glutamate; N-formimidoyl-L-glutamate from L-histidine: step 2/3. In terms of biological role, catalyzes the conversion of urocanate to 4-imidazolone-5-propionate. The sequence is that of Urocanate hydratase from Bradyrhizobium sp. (strain ORS 278).